Here is a 102-residue protein sequence, read N- to C-terminus: Small ribosomal subunit protein uS17 (102 aa).

Residues 1–27 are disordered; it reads MEQTEEHTDTHTDEQDEAVDRNDRKER.

Belongs to the universal ribosomal protein uS17 family. As to quaternary structure, part of the 30S ribosomal subunit.

Its function is as follows. One of the primary rRNA binding proteins, it binds specifically to the 5'-end of 16S ribosomal RNA. This Salinibacter ruber (strain DSM 13855 / M31) protein is Small ribosomal subunit protein uS17.